The following is a 463-amino-acid chain: uncharacterized protein (463 aa).

The next 6 helical transmembrane spans lie at 3 to 23 (IPPE…SLLV), 88 to 108 (VAAA…AELA), 112 to 132 (AIHG…PIAL), 216 to 236 (FSPA…DFLW), 245 to 265 (LLLL…SALI), and 276 to 296 (LPIA…AVAV). The disordered stretch occupies residues 303-322 (VPGGSPPTSNPAPAAPSSNS). Over residues 306-316 (GSPPTSNPAPA) the composition is skewed to pro residues. A run of 2 helical transmembrane segments spans residues 323–343 (VGSA…APPG) and 419–439 (AGTL…AGMV).

It belongs to the mycobacterial PPE family.

Its subcellular location is the cell membrane. This is an uncharacterized protein from Mycobacterium tuberculosis (strain CDC 1551 / Oshkosh).